The primary structure comprises 75 residues: Small ribosomal subunit protein bS18c (75 aa).

It belongs to the bacterial ribosomal protein bS18 family. As to quaternary structure, part of the 30S ribosomal subunit.

Its subcellular location is the plastid. The chain is Small ribosomal subunit protein bS18c from Aneura mirabilis (Parasitic liverwort).